The primary structure comprises 641 residues: Hemagglutinin-esterase-fusion glycoprotein (641 aa).

Residues 1-26 (EKIKICLQKQVNSSFSLHNGFGGNLY) form a fusion domain-1 region. Residues 1 to 616 (EKIKICLQKQ…QSDPFYWGSS (616 aa)) are Extracellular-facing. 7 cysteine pairs are disulfide-bonded: Cys6–Cys569, Cys106–Cys151, Cys126–Cys174, Cys196–Cys238, Cys215–Cys302, Cys223–Cys275, and Cys332–Cys338. N-linked (GlcNAc...) asparagine; by host glycans are attached at residues Asn12 and Asn47. Residues 27–137 (ATEEKRMFEL…RKNWTDIKLN (111 aa)) are esterase domain-1. Ser57 serves as the catalytic Nucleophile. Asn130 is a glycosylation site (N-linked (GlcNAc...) asparagine; by host). The segment at 137–296 (NFQKNIYELA…VRSSPRFLLM (160 aa)) is N-acetyl-9-O-acetylneuraminic acid binding. An esterase domain-2 region spans residues 297 to 351 (PERSYCFDMKEKGPVTAVQSIWGKDRKSDYAVDQACLSTPGCMLIQKQKPYTGEA). Catalysis depends on charge relay system residues Asp352 and His355. The interval 352-637 (DDHHGDQEMR…AALVISGIAI (286 aa)) is fusion domain-2. An N-linked (GlcNAc...) asparagine; by host glycan is attached at Asn381. The chain crosses the membrane as a helical span at residues 617–637 (LGLAITAAISLAALVISGIAI). Topologically, residues 638 to 641 (CRTK) are cytoplasmic.

This sequence belongs to the influenza type C/coronaviruses hemagglutinin-esterase family. Homotrimer of disulfide-linked HEF1-HEF2. In natural infection, inactive HEF is matured into HEF1 and HEF2 outside the cell by one or more trypsin-like, arginine-specific endoprotease.

It localises to the virion membrane. The protein localises to the host cell membrane. It carries out the reaction N-acetyl-9-O-acetylneuraminate + H2O = N-acetylneuraminate + acetate + H(+). It catalyses the reaction N-acetyl-4-O-acetylneuraminate + H2O = N-acetylneuraminate + acetate + H(+). Its function is as follows. Binds to the N-acetyl-9-O-acetylneuraminic acid residues on the cell surface, bringing about the attachment of the virus particle to the cell. Plays a major role in the determination of host range restriction and virulence. Class I viral fusion protein. Responsible for penetration of the virus into the cell cytoplasm by mediating the fusion of the membrane of the endocytosed virus particle with the endosomal membrane. Low pH in endosomes induce an irreversible conformational change in HEF2, releasing the fusion hydrophobic peptide. Several trimers are required to form a competent fusion pore. Displays a receptor-destroying activity which is a neuraminidate-O-acetyl esterase. This activity cleaves off any receptor on the cell surface, which would otherwise prevent virions release. These cleavages prevent self-aggregation and ensure the efficient spread of the progeny virus from cell to cell. The polypeptide is Hemagglutinin-esterase-fusion glycoprotein (HE) (Influenza C virus (strain C/Kyoto/41/1982)).